A 291-amino-acid polypeptide reads, in one-letter code: Neugrin (291 aa).

The first 15 residues, 1–15 (MAVTLSLLLSGRVCA), serve as a signal peptide directing secretion. Residues 27–49 (VADPGPIGREPDPDSDWEPEERE) are disordered. Over residues 39-49 (PDSDWEPEERE) the composition is skewed to acidic residues. Ser41 carries the phosphoserine modification. Asn158 carries N-linked (GlcNAc...) asparagine glycosylation. Residues 224–270 (VAAPLGHPRELQKYSSDSESPRRTGNGALPSDQKLEELKAEEPGNFS) are disordered. Basic and acidic residues predominate over residues 256-265 (QKLEELKAEE).

The protein belongs to the neugrin family. In terms of assembly, forms a regulatory protein-RNA complex, consisting of RCC1L, NGRN, RPUSD3, RPUSD4, TRUB2, FASTKD2 and 16S mt-rRNA. Interacts with 16S mt-rRNA; this interaction is direct.

Its subcellular location is the nucleus. The protein resides in the secreted. It localises to the mitochondrion membrane. In terms of biological role, plays an essential role in mitochondrial ribosome biogenesis. As a component of a functional protein-RNA module, consisting of RCC1L, NGRN, RPUSD3, RPUSD4, TRUB2, FASTKD2 and 16S mitochondrial ribosomal RNA (16S mt-rRNA), controls 16S mt-rRNA abundance and is required for intra-mitochondrial translation of core subunits of the oxidative phosphorylation system. In Pongo abelii (Sumatran orangutan), this protein is Neugrin (NGRN).